The chain runs to 159 residues: Transcriptional repressor NrdR (159 aa).

The segment covering 1-11 (MQCPTCQNTDS) has biased composition (polar residues). A disordered region spans residues 1-21 (MQCPTCQNTDSRVLESRSADS). A zinc finger spans residues 3-34 (CPTCQNTDSRVLESRSADSGKSVRRRRECLNC). The 91-residue stretch at 49–139 (VSVLKKDGSR…VYRKFNGVKD (91 aa)) folds into the ATP-cone domain.

It belongs to the NrdR family. Zn(2+) serves as cofactor.

In terms of biological role, negatively regulates transcription of bacterial ribonucleotide reductase nrd genes and operons by binding to NrdR-boxes. The sequence is that of Transcriptional repressor NrdR from Prochlorococcus marinus (strain MIT 9301).